Reading from the N-terminus, the 187-residue chain is NADH-quinone oxidoreductase subunit B (187 aa).

Over residues 1–10 the composition is skewed to basic and acidic residues; that stretch reads MTADHNRALH. The disordered stretch occupies residues 1–22; that stretch reads MTADHNRALHDAPTARGGEVRQ. [4Fe-4S] cluster contacts are provided by Cys66, Cys67, Cys131, and Cys161.

This sequence belongs to the complex I 20 kDa subunit family. In terms of assembly, NDH-1 is composed of 14 different subunits. Subunits NuoB, C, D, E, F, and G constitute the peripheral sector of the complex. It depends on [4Fe-4S] cluster as a cofactor.

Its subcellular location is the cell inner membrane. It catalyses the reaction a quinone + NADH + 5 H(+)(in) = a quinol + NAD(+) + 4 H(+)(out). NDH-1 shuttles electrons from NADH, via FMN and iron-sulfur (Fe-S) centers, to quinones in the respiratory chain. Couples the redox reaction to proton translocation (for every two electrons transferred, four hydrogen ions are translocated across the cytoplasmic membrane), and thus conserves the redox energy in a proton gradient. This chain is NADH-quinone oxidoreductase subunit B, found in Erythrobacter litoralis (strain HTCC2594).